Here is a 270-residue protein sequence, read N- to C-terminus: Putative pyruvate, phosphate dikinase regulatory protein (270 aa).

147-154 (GVSRSSKT) lines the ADP pocket.

The protein belongs to the pyruvate, phosphate/water dikinase regulatory protein family. PDRP subfamily.

It catalyses the reaction N(tele)-phospho-L-histidyl/L-threonyl-[pyruvate, phosphate dikinase] + ADP = N(tele)-phospho-L-histidyl/O-phospho-L-threonyl-[pyruvate, phosphate dikinase] + AMP + H(+). It carries out the reaction N(tele)-phospho-L-histidyl/O-phospho-L-threonyl-[pyruvate, phosphate dikinase] + phosphate + H(+) = N(tele)-phospho-L-histidyl/L-threonyl-[pyruvate, phosphate dikinase] + diphosphate. Bifunctional serine/threonine kinase and phosphorylase involved in the regulation of the pyruvate, phosphate dikinase (PPDK) by catalyzing its phosphorylation/dephosphorylation. This is Putative pyruvate, phosphate dikinase regulatory protein from Citrifermentans bemidjiense (strain ATCC BAA-1014 / DSM 16622 / JCM 12645 / Bem) (Geobacter bemidjiensis).